Reading from the N-terminus, the 119-residue chain is Developmental pluripotency-associated protein 5B/5C (119 aa).

One can recognise a KH; atypical domain in the interval 24-86 (PEVFQVQSLV…SIKVRAKWLL (63 aa)).

It belongs to the KHDC1 family.

Its subcellular location is the cytoplasm. Involved in the maintenance of embryonic stem (ES) cell pluripotency. Dispensable for self-renewal of pluripotent ES cells and establishment of germ cells. Associates with specific target mRNAs. The chain is Developmental pluripotency-associated protein 5B/5C from Mus musculus (Mouse).